Reading from the N-terminus, the 252-residue chain is 5-oxoprolinase subunit A (252 aa).

The protein belongs to the LamB/PxpA family. In terms of assembly, forms a complex composed of PxpA, PxpB and PxpC.

It catalyses the reaction 5-oxo-L-proline + ATP + 2 H2O = L-glutamate + ADP + phosphate + H(+). Catalyzes the cleavage of 5-oxoproline to form L-glutamate coupled to the hydrolysis of ATP to ADP and inorganic phosphate. This is 5-oxoprolinase subunit A from Mycobacterium marinum (strain ATCC BAA-535 / M).